The sequence spans 164 residues: Endoribonuclease YbeY (164 aa).

The Zn(2+) site is built by H124, H128, and H134.

This sequence belongs to the endoribonuclease YbeY family. Zn(2+) is required as a cofactor.

The protein resides in the cytoplasm. Its function is as follows. Single strand-specific metallo-endoribonuclease involved in late-stage 70S ribosome quality control and in maturation of the 3' terminus of the 16S rRNA. This Nitrosomonas europaea (strain ATCC 19718 / CIP 103999 / KCTC 2705 / NBRC 14298) protein is Endoribonuclease YbeY.